The chain runs to 994 residues: Chloride channel protein 1 (994 aa).

Over 1 to 118 (MERSQSQQHG…VLRRKLGEDW (118 aa)) the chain is Cytoplasmic. The disordered stretch occupies residues 37–61 (SENGGLQHRPRKDLGPRHNAHPTQI). The chain crosses the membrane as a helical span at residues 119–150 (IFLVLLGLLMALVSWCMDYVSAKSLQAYKWTY). The Extracellular portion of the chain corresponds to 151–158 (AQMQPSLP). A helical membrane pass occupies residues 159 to 179 (LQYLAWVTFPLILILFSALFC). Topologically, residues 180–183 (QLIS) are cytoplasmic. Positions 184–189 (PQAVGS) form an intramembrane region, note=Loop between two helices. A Selectivity filter part_1 motif is present at residues 188 to 192 (GSGIP). Ser189 serves as a coordination point for chloride. Residues 190–195 (GIPEMK) constitute an intramembrane region (helical). Residues 196–208 (TILRGVVLKEYLT) lie on the Cytoplasmic side of the membrane. The helical intramembrane region spans 209–224 (LKAFVAKVVALTAGLG). Residues 225 to 230 (SGIPVG) constitute an intramembrane region (note=Loop between two helices). The Selectivity filter part_2 signature appears at 230–234 (GKEGP). Residues 231–246 (KEGPFVHIASICAAVL) constitute an intramembrane region (helical). The Cytoplasmic portion of the chain corresponds to 247 to 268 (SKFMSMFSGVYEQPYYYTDILT). 2 consecutive intramembrane regions (helical) follow at residues 269–280 (VGCAVGVGCCFG) and 281–290 (TPLGGVLFSI). Residues 291–301 (EVTSTYFAVRN) lie on the Cytoplasmic side of the membrane. A helical membrane pass occupies residues 302-321 (YWRGFFAATFSAFVFRVLAV). The Extracellular segment spans residues 322–347 (WNKDAVTITALFRTNFRMDFPFDLKE). A helical membrane pass occupies residues 348 to 376 (LPAFAVIGICCGFLGAVFVYLHRQVMLGV). At 377–390 (RKHKALSQFLAKHR) the chain is on the cytoplasmic side. Residues 391–408 (LLYPGIVTFVIASLTFPP) form a helical membrane-spanning segment. At 409-414 (GMGQFM) the chain is on the extracellular side. Positions 415–418 (AGEL) form an intramembrane region, note=Loop between two helices. The segment at residues 419-426 (MPREAIST) is an intramembrane region (helical). Over 427–457 (LFDNNTWVKHIGDPKSLGQSAVWIHPQVNVV) the chain is Extracellular. Positions 458–475 (IIILLFFVMKFWMSIVAT) form an intramembrane region, helical. An intramembrane region (note=Loop between two helices) is located at residues 476–482 (TMPIPCG). Positions 482 to 486 (GGFMP) match the Selectivity filter part_3 motif. An intramembrane region (helical) is located at residues 483-498 (GFMPVFVLGAAFGRLV). Phe484 is a chloride binding site. Topologically, residues 499–521 (GEIMAMLFPEGILFDDIIYKILP) are extracellular. Positions 522-538 (GGYAVIGAAALTGAVSH) form an intramembrane region, helical. Positions 539-540 (TV) form an intramembrane region, note=Loop between two helices. Residues 541–554 (STAVICFELTGQIA) constitute an intramembrane region (helical). The Extracellular portion of the chain corresponds to 555-557 (HIL). An intramembrane region (helical) is located at residues 558–571 (PMMVAVILANMVAQ). Positions 572 to 575 (SLQP) form an intramembrane region, note=Loop between two helices. Positions 576-578 (SLY) form an intramembrane region, helical. Tyr578 contributes to the chloride binding site. Over 579 to 994 (DSIIQVKKLP…DEEDEDELIL (416 aa)) the chain is Cytoplasmic. The CBS 1 domain occupies 609–668 (MVRDVKFVSASCTYGELRNLLQTTTVKTLPLVDSKDSMILLGSVERSELQSLLQRHLCAE). 3 disordered regions span residues 710-769 (EDED…SADQ), 880-923 (TKSG…DGAP), and 965-994 (NLGP…ELIL). The span at 725–741 (TPTPPPPPPPPLPPQFP) shows a compositional bias: pro residues. In terms of domain architecture, CBS 2 spans 827-882 (IDQSPFQLVEQTTLHKTHTLFSLLGLHLAYVTSMGKLRGVLALEELQKAIKGHTKS). At Ser892 the chain carries Phosphoserine. Residues 985–994 (DEEDEDELIL) show a composition bias toward acidic residues.

This sequence belongs to the chloride channel (TC 2.A.49) family. ClC-1/CLCN1 subfamily. In terms of assembly, homodimer. Predominantly expressed in skeletal muscles.

The protein localises to the cell membrane. The protein resides in the sarcolemma. Its subcellular location is the T-tubule. It catalyses the reaction chloride(in) = chloride(out). It carries out the reaction bromide(in) = bromide(out). The enzyme catalyses iodide(out) = iodide(in). The catalysed reaction is thiocyanate(in) = thiocyanate(out). It catalyses the reaction nitrate(in) = nitrate(out). With respect to regulation, modulated by membrane voltage with depolarization favouring channel opening and hyperpolarization favouring channel closure. Inhibited by acidic pH and ATP binding due to a shift of voltage dependence of common gating to more positive voltages. Inhibited by 9-anthracene-carboxylic acid. In terms of biological role, voltage-gated chloride channel involved in skeletal muscle excitability. Generates most of the plasma membrane chloride conductance in skeletal muscle fibers, stabilizes the resting membrane potential and contributes to the repolarization phase during action potential firing. Forms a homodimeric channel where each subunit has its own ion conduction pathway. Conducts double-barreled currents controlled by two types of gates, two fast glutamate gates that control each subunit independently and a slow common gate that opens and shuts off both subunits simultaneously. Has a significant open probability at muscle resting potential and is further activated upon membrane depolarization. Permeable to small monovalent anions with ion selectivity for chloride &gt; thiocyanate &gt; bromide &gt; nitrate &gt; iodide. In Rattus norvegicus (Rat), this protein is Chloride channel protein 1 (Clcn1).